A 402-amino-acid polypeptide reads, in one-letter code: Queuine tRNA-ribosyltransferase-like protein (402 aa).

This sequence belongs to the queuine tRNA-ribosyltransferase family.

This chain is Queuine tRNA-ribosyltransferase-like protein, found in Theileria annulata.